The chain runs to 52 residues: Eukaryotic translation initiation factor 2 subunit 1 (52 aa).

Positions 16–52 constitute an S1 motif domain; sequence EDVVMVNVRSIAEMGAYVSLLEYNNIEGRILLSELSR. The residue at position 48 (serine 48) is a Phosphoserine; by HRI. Serine 51 is subject to Phosphoserine.

Belongs to the eIF-2-alpha family. In terms of assembly, eukaryotic translation initiation factor 2 eIF2 is a heterotrimeric complex composed of an alpha (EIF2S1), a beta (EIF2S2) and a gamma (EIF2S3) chain. eIF2 is member of the 43S pre-initiation complex (43S PIC). eIF2 forms a complex with at least CELF1/CUGBP1, CALR, CALR3, EIF2S1, EIF2S2, HSP90B1 and HSPA5. Interaction with METAP2 protects EIF2S1 from inhibitory phosphorylation. Interacts with ABCF1. Associates with ribosomes. Interacts with DDX3X in an RNA-independent manner. Post-translationally, phosphorylation at Ser-48 and Ser-51 stabilizes the eIF-2/GDP/eIF2B complex and prevents GDP/GTP exchange reaction, thus impairing the recycling of eIF-2 between successive rounds of initiation and leading to global inhibition of translation, while concomitantly initiating the preferential translation of integrated stress response (ISR)-specific mRNAs. Substrate for at least 4 kinases: EIF2AK1/HRI, EIF2AK2/PKR, EIF2AK3/PERK and EIF2AK4/GCN2. Phosphorylation on Ser-51 by the EIF2AK4/GCN2 protein kinase occurs in response to amino acid starvation and UV irradiation. Phosphorylation at Ser-51 by the EIF2AK3/PERK protein kinase occurs in response to the unfolded protein response. Phosphorylation at Ser-51 by EIF2AK1/HRI in response to mitochondrial damage promotes relocalization to the mitochondrial surface.

It is found in the cytoplasm. Its subcellular location is the stress granule. The protein localises to the cytosol. It localises to the mitochondrion. Its activity is regulated as follows. Activity is regulated by phosphorylation at Ser-49 and Ser-52, which stabilizes the eIF2/GDP/eIF2B complex and prevents the eIF2B-mediated exchange of GDP for GTP, thereby preventing the formation of the 43S pre-initiation complex (43S PIC). This results in the global attenuation of 5' cap-dependent protein synthesis and concomitant translation of ISR-specific mRNAs that contain a short upstream open reading frame (uORF) in their 5' UTR, such as ATF4, ATF5, DDIT3/CHOP and PPP1R15A/GADD34. Member of the eIF2 complex that functions in the early steps of protein synthesis by forming a ternary complex with GTP and initiator tRNA. This complex binds to a 40S ribosomal subunit, followed by mRNA binding to form a 43S pre-initiation complex. Junction of the 60S ribosomal subunit to form the 80S initiation complex is preceded by hydrolysis of the GTP bound to eIF2 and release of an eIF2-GDP binary complex. In order for eIF2 to recycle and catalyze another round of initiation, the GDP bound to eIF2 must exchange with GTP by way of a reaction catalyzed by eIF2B. EIF2S1/eIF2-alpha is a key component of the integrated stress response (ISR), required for adaptation to various stress: phosphorylation by metabolic-stress sensing protein kinases (EIF2AK1/HRI, EIF2AK2/PKR, EIF2AK3/PERK and EIF2AK4/GCN2) in response to stress converts EIF2S1/eIF2-alpha in a global protein synthesis inhibitor, leading to a attenuation of cap-dependent translation, while concomitantly initiating the preferential translation of ISR-specific mRNAs, such as the transcriptional activators ATF4 and QRICH1, and hence allowing ATF4- and QRICH1-mediated reprogramming. EIF2S1/eIF2-alpha also acts as an activator of mitophagy in response to mitochondrial damage: phosphorylation by EIF2AK1/HRI promotes relocalization to the mitochondrial surface, thereby triggering PRKN-independent mitophagy. The chain is Eukaryotic translation initiation factor 2 subunit 1 (EIF2S1) from Oryctolagus cuniculus (Rabbit).